A 325-amino-acid chain; its full sequence is Hydroxymethylglutaryl-CoA lyase, mitochondrial (325 aa).

A mitochondrion-targeting transit peptide spans 1 to 27 (MATVRKAFPQRLVGLASLRAASTSSMG). Positions 33-300 (VKIVEVGPRD…HTGVNLQKLL (268 aa)) constitute a Pyruvate carboxyltransferase domain. Arg-41 serves as a coordination point for substrate. Asp-42 is a binding site for a divalent metal cation. At Lys-48 the chain carries N6-acetyllysine; alternate. At Lys-48 the chain carries N6-succinyllysine; alternate. Lys-111 bears the N6-acetyllysine mark. An N6-acetyllysine; alternate mark is found at Lys-137 and Lys-179. N6-succinyllysine; alternate is present on residues Lys-137 and Lys-179. A divalent metal cation is bound by residues His-233 and His-235. Cys-266 is an active-site residue. An a divalent metal cation-binding site is contributed by Asn-275. The short motif at 323–325 (CKL) is the Microbody targeting signal element. Position 324 is an N6-acetyllysine (Lys-324).

Belongs to the HMG-CoA lyase family. In terms of assembly, homodimer; disulfide-linked. Can also form homotetramers. As to expression, in suckling rat, highest levels in liver and in intestine. Lower levels in heart, kidney and cerebellum. Weak expression in brain cortex, medulla and midbrain. Levels decrease slightly during weaning.

The protein resides in the mitochondrion matrix. It is found in the peroxisome. The catalysed reaction is (3S)-3-hydroxy-3-methylglutaryl-CoA = acetoacetate + acetyl-CoA. It participates in metabolic intermediate metabolism; (S)-3-hydroxy-3-methylglutaryl-CoA degradation; acetoacetate from (S)-3-hydroxy-3-methylglutaryl-CoA: step 1/1. Mitochondrial 3-hydroxy-3-methylglutaryl-CoA lyase that catalyzes a cation-dependent cleavage of (S)-3-hydroxy-3-methylglutaryl-CoA into acetyl-CoA and acetoacetate, a key step in ketogenesis. Terminal step in leucine catabolism. Ketone bodies (beta-hydroxybutyrate, acetoacetate and acetone) are essential as an alternative source of energy to glucose, as lipid precursors and as regulators of metabolism. The chain is Hydroxymethylglutaryl-CoA lyase, mitochondrial (Hmgcl) from Rattus norvegicus (Rat).